Here is a 153-residue protein sequence, read N- to C-terminus: Ribonuclease H (153 aa).

In terms of domain architecture, RNase H type-1 spans 1-141 (MKLVEIFTDG…CDELAKAGAN (141 aa)). Residues Asp-9, Glu-47, Asp-69, and Asp-133 each contribute to the Mg(2+) site.

The protein belongs to the RNase H family. In terms of assembly, monomer. It depends on Mg(2+) as a cofactor.

The protein resides in the cytoplasm. The enzyme catalyses Endonucleolytic cleavage to 5'-phosphomonoester.. Endonuclease that specifically degrades the RNA of RNA-DNA hybrids. The polypeptide is Ribonuclease H (Actinobacillus pleuropneumoniae serotype 5b (strain L20)).